Here is a 511-residue protein sequence, read N- to C-terminus: MAPKKKGQKMALHEFFEEAATSGTSWADDDFDLPTAPAAREESGSGLKRGDPGYFESLPDRGSRQATFAGAPVQREELPLPTVPPFTAFIGNLSFEPDVEDEVRAFFNDLDPVSVRIVKDPQGKPKGFGYAEFKTQDGLKQALDRSMSQLQGRTIRVNVAEAPSTSRHPPSAAEEASQWRRSTPLASRESSSQPSRRTGGPSEPAADLDWSVARGAKFTPSAPAAPLSGVRRDSSGPGHTREPRDPGVSDTADQWRSNKPLAEKVDRDVPPHQAGVAPPIVSPSLADTEQTWSRGTKLRTPTTTSRQSSADSTPSSGAPQERRKLNLKPRTAGSPSATANATPAAPASGIFGAAKPIDSAAREKAAEEKLAQREGERRKAREEAEKQKAAAGDKPVEGEKLGWREEKLRSIKAAQDKVAGKPTTAPATTTNTGAGRKGSADRAKKDEQGFEQVQPSRKSSQTGATSENKPKKDYSTRPQFSFAAAAGAIRNDLVEDKDEEEVTKGVEEVKI.

Disordered regions lie at residues 25 to 63 and 154 to 511; these read SWAD…DRGS and TIRV…EVKI. A compositionally biased stretch (basic and acidic residues) spans 39 to 51; it reads AREESGSGLKRGD. The region spanning 86 to 162 is the RRM domain; the sequence is FTAFIGNLSF…RTIRVNVAEA (77 aa). Polar residues predominate over residues 179 to 196; that stretch reads WRRSTPLASRESSSQPSR. Composition is skewed to basic and acidic residues over residues 230-247 and 261-270; these read VRRD…RDPG and LAEKVDRDVP. The segment covering 285–318 has biased composition (polar residues); it reads LADTEQTWSRGTKLRTPTTTSRQSSADSTPSSGA. Over residues 331–349 the composition is skewed to low complexity; that stretch reads TAGSPSATANATPAAPASG. A Phosphoserine modification is found at Ser334. Composition is skewed to basic and acidic residues over residues 360-388 and 394-419; these read AARE…EKQK and KPVE…DKVA. Over residues 420–434 the composition is skewed to low complexity; the sequence is GKPTTAPATTTNTGA. A compositionally biased stretch (basic and acidic residues) spans 438-448; sequence GSADRAKKDEQ. Residues 451–467 show a composition bias toward polar residues; sequence EQVQPSRKSSQTGATSE. Over residues 502 to 511 the composition is skewed to basic and acidic residues; sequence VTKGVEEVKI.

The protein localises to the cytoplasm. It localises to the P-body. In terms of biological role, probable translation initiation factor. The sequence is that of Probable eukaryotic translation initiation factor 4H from Cryptococcus neoformans var. grubii serotype A (strain H99 / ATCC 208821 / CBS 10515 / FGSC 9487) (Filobasidiella neoformans var. grubii).